The primary structure comprises 158 residues: C-type lectin TsL (158 aa).

Residues 1–23 (MGRFIFVSFGLLVVFLSLSGAKG) form the signal peptide. A C-type lectin domain is found at 24 to 158 (SCCTNDSLPM…KNSFLCQCKF (135 aa)). Disulfide bonds link Cys26/Cys37, Cys54/Cys154, Cys61/Cys156, and Cys129/Cys146. N-linked (GlcNAc...) (high mannose) asparagine glycosylation is present at Asn28. 5 residues coordinate Ca(2+): Gln119, Asp121, Glu127, Asn142, and Asp143. The Galactose-binding signature appears at 119–121 (QPD).

It belongs to the true venom lectin family. In terms of assembly, homodimer; disulfide-linked. In terms of tissue distribution, expressed by the venom gland.

Its subcellular location is the secreted. Galactose-binding protein which recognizes specific carbohydrate structures and agglutinates a variety of animal cells by binding to cell-surface glycoproteins and glycolipids. May be a calcium-dependent lectin. This chain is C-type lectin TsL, found in Trimeresurus stejnegeri (Chinese green tree viper).